The following is a 101-amino-acid chain: uncharacterized protein (101 aa).

The next 2 helical transmembrane spans lie at 3–23 (IIGSAFLGIVFCILLAFAIIF) and 68–88 (VIVLTIICFLIFITPIIIIVI).

Its subcellular location is the cell membrane. This is an uncharacterized protein from Ureaplasma parvum serovar 3 (strain ATCC 700970).